A 317-amino-acid chain; its full sequence is Melanocyte-stimulating hormone receptor (317 aa).

At M1–E37 the chain is on the extracellular side. Residue N29 is glycosylated (N-linked (GlcNAc...) asparagine). Residues V38 to I63 form a helical membrane-spanning segment. Over A64–P72 the chain is Cytoplasmic. Residues M73 to L93 traverse the membrane as a helical segment. Topologically, residues E94–N118 are extracellular. Residues V119–V140 traverse the membrane as a helical segment. The Cytoplasmic segment spans residues D141–R163. Residues A164–Y183 traverse the membrane as a helical segment. The Extracellular segment spans residues D184 to C191. A helical membrane pass occupies residues L192–L211. The Cytoplasmic segment spans residues A212–A240. The chain crosses the membrane as a helical span at residues A241–L266. The Extracellular segment spans residues C267–N279. The chain crosses the membrane as a helical span at residues F280–F300. Residues R301 to W317 are Cytoplasmic-facing. C315 carries the S-palmitoyl cysteine lipid modification.

Belongs to the G-protein coupled receptor 1 family. As to quaternary structure, interacts with MGRN1, but does not undergo MGRN1-mediated ubiquitination; this interaction competes with GNAS-binding and thus inhibits agonist-induced cAMP production. Interacts with OPN3; the interaction results in a decrease in MC1R-mediated cAMP signaling and ultimately a decrease in melanin production in melanocytes.

Its subcellular location is the cell membrane. Functionally, receptor for MSH (alpha, beta and gamma) and ACTH. The activity of this receptor is mediated by G proteins which activate adenylate cyclase. Mediates melanogenesis, the production of eumelanin (black/brown) and phaeomelanin (red/yellow), via regulation of cAMP signaling in melanocytes. This is Melanocyte-stimulating hormone receptor (MC1R) from Chlorocebus aethiops (Green monkey).